The chain runs to 545 residues: Glucose-6-phosphate isomerase (545 aa).

The active-site Proton donor is the E351. Active-site residues include H382 and K510.

Belongs to the GPI family.

The protein resides in the cytoplasm. It catalyses the reaction alpha-D-glucose 6-phosphate = beta-D-fructose 6-phosphate. Its pathway is carbohydrate biosynthesis; gluconeogenesis. The protein operates within carbohydrate degradation; glycolysis; D-glyceraldehyde 3-phosphate and glycerone phosphate from D-glucose: step 2/4. Catalyzes the reversible isomerization of glucose-6-phosphate to fructose-6-phosphate. The chain is Glucose-6-phosphate isomerase from Shewanella halifaxensis (strain HAW-EB4).